The chain runs to 237 residues: MGRKSNRAKEKKQRRLEERAAMDAVCAKVDAANKLEDPLSAMPVFKKYDRNGLNLQIECKRVTALSPDTVEWAYELTRANMQTLYEQSEWGWKEREKREEMKDERAWYLLARDADSTPLAFSHFRFDVECGDEVLYCYEVQLESKVRRKGLGKFLIQILQLIANSTQMKKVMLTVFKHNHGAYQFFREALQFEIDETSPSMSGCCGEDCSYEILSRRTKYGEVSGHAHGGHCGGCCH.

G2 is lipidated: N-myristoyl glycine. An N-acetyltransferase domain is found at 63 to 216 (TALSPDTVEW…EDCSYEILSR (154 aa)). Substrate contacts are provided by residues Y85, 127-129 (DVE), and Y138. Acetyl-CoA is bound by residues 140-142 (VQL) and 148-153 (RKGLGK). T174 is a binding site for substrate. N179 contributes to the acetyl-CoA binding site. Y211 is a substrate binding site.

Belongs to the acetyltransferase family. NAA40 subfamily.

The protein resides in the cytoplasm. Its subcellular location is the nucleus. It catalyses the reaction N-terminal L-seryl-[histone H4] + acetyl-CoA = N-terminal N(alpha)-acetyl-L-seryl-[histone H4] + CoA + H(+). It carries out the reaction N-terminal L-seryl-[histone H2A] + acetyl-CoA = N-terminal N(alpha)-acetyl-L-seryl-[histone H2A] + CoA + H(+). Functionally, N-alpha-acetyltransferase that specifically mediates the acetylation of the N-terminal residues of histones H4 and H2A. In contrast to other N-alpha-acetyltransferase, has a very specific selectivity for histones H4 and H2A N-terminus and specifically recognizes the 'Ser-Gly-Arg-Gly sequence'. The protein is N-alpha-acetyltransferase 40 (naa40) of Danio rerio (Zebrafish).